The primary structure comprises 425 residues: 2-methylserine hydroxymethyltransferase (425 aa).

Residues Leu126 and 130–132 (GHL) each bind (6S)-5,6,7,8-tetrahydrofolate. Residue Lys235 is modified to N6-(pyridoxal phosphate)lysine. Residue Glu251 coordinates (6S)-5,6,7,8-tetrahydrofolate.

Belongs to the SHMT family. Homodimer. It depends on pyridoxal 5'-phosphate as a cofactor.

It is found in the cytoplasm. The enzyme catalyses (6R)-5,10-methylene-5,6,7,8-tetrahydrofolate + D-alanine + H2O = 2-methylserine + (6S)-5,6,7,8-tetrahydrofolate. The protein operates within one-carbon metabolism; tetrahydrofolate interconversion. Its activity is regulated as follows. Inhibited by hydroxylamine and sodium borohydride. Its function is as follows. Catalyzes the reversible interconversion of alpha-methyl-L-serine to D-alanine with tetrahydrofolate (THF) serving as the one-carbon carrier. Cannot use alpha-methyl-D-serine, L-serine, D-serine or L-alanine. The protein is 2-methylserine hydroxymethyltransferase of Paracoccus sp.